The following is an 89-amino-acid chain: Small ribosomal subunit protein uS14 (89 aa).

The protein belongs to the universal ribosomal protein uS14 family. Part of the 30S ribosomal subunit. Contacts proteins S3 and S10.

Binds 16S rRNA, required for the assembly of 30S particles and may also be responsible for determining the conformation of the 16S rRNA at the A site. This Azobacteroides pseudotrichonymphae genomovar. CFP2 protein is Small ribosomal subunit protein uS14.